A 356-amino-acid chain; its full sequence is Alanine racemase (356 aa).

The active-site Proton acceptor; specific for D-alanine is Lys-35. Residue Lys-35 is modified to N6-(pyridoxal phosphate)lysine. Arg-130 contributes to the substrate binding site. The Proton acceptor; specific for L-alanine role is filled by Tyr-253. Met-301 provides a ligand contact to substrate.

Belongs to the alanine racemase family. The cofactor is pyridoxal 5'-phosphate.

It carries out the reaction L-alanine = D-alanine. It participates in amino-acid biosynthesis; D-alanine biosynthesis; D-alanine from L-alanine: step 1/1. In terms of biological role, catalyzes the interconversion of L-alanine and D-alanine. May also act on other amino acids. The protein is Alanine racemase (alr) of Sodalis glossinidius (strain morsitans).